The following is a 432-amino-acid chain: MRVVILGSGVVGVASAWYLNQAGHEVTVIDREPGAALETSAANAGQISPGYAAPWAAPGVPLKAIKWMFQRHAPLAVRLDGTQFQLKWMWQMLRNCDTSHYMENKGRMVRLAEYSRDCLKVLRAETNIQYEGRQGGTLQLFRTEQQYENATRDIAVLEDAGVPYQLLESSRLAEVEPALAEVAHKLTGGLQLPNDETGDCQLFTQNLARMAEQAGVKFHFNTPVDQLLCDGEQIYGVKCGDEVIKADAYVMAFGSYSTAMLKGIVDIPVYPLKGYSLTIPIAQEDGAPVSTILDETYKIAITRFDNRIRVGGMAEIVGFNTELLQPRRETLEMVVRDLYPRGGHVEQATFWTGLRPMTPDGTPVVGRTRFKNLWLNTGHGTLGWTMACGSSQLLSDLLSGRTPAIPYEDLSVARYSRGFTPSRPGHLHGAHS.

V3–W17 lines the FAD pocket.

It belongs to the DadA oxidoreductase family. FAD is required as a cofactor.

The catalysed reaction is a D-alpha-amino acid + A + H2O = a 2-oxocarboxylate + AH2 + NH4(+). It participates in amino-acid degradation; D-alanine degradation; NH(3) and pyruvate from D-alanine: step 1/1. Oxidative deamination of D-amino acids. The protein is D-amino acid dehydrogenase of Escherichia coli O127:H6 (strain E2348/69 / EPEC).